Consider the following 130-residue polypeptide: D-ribose pyranase (130 aa).

Histidine 20 (proton donor) is an active-site residue. Substrate is bound by residues aspartate 28, histidine 97, and 119–121 (YAN).

The protein belongs to the RbsD / FucU family. RbsD subfamily. In terms of assembly, homodecamer.

The protein resides in the cytoplasm. It catalyses the reaction beta-D-ribopyranose = beta-D-ribofuranose. It participates in carbohydrate metabolism; D-ribose degradation; D-ribose 5-phosphate from beta-D-ribopyranose: step 1/2. Catalyzes the interconversion of beta-pyran and beta-furan forms of D-ribose. The polypeptide is D-ribose pyranase (Thermoanaerobacter pseudethanolicus (strain ATCC 33223 / 39E) (Clostridium thermohydrosulfuricum)).